A 233-amino-acid polypeptide reads, in one-letter code: Thrombin-like enzyme elegaxobin-1 (233 aa).

The Peptidase S1 domain maps to 1 to 224 (VIGGDECNIN…HLDWIKGIIA (224 aa)). 6 disulfides stabilise this stretch: cysteine 7/cysteine 138, cysteine 25/cysteine 41, cysteine 73/cysteine 231, cysteine 117/cysteine 185, cysteine 149/cysteine 164, and cysteine 175/cysteine 200. Active-site charge relay system residues include histidine 40 and aspartate 85. The active-site Charge relay system is serine 179.

The protein belongs to the peptidase S1 family. Snake venom subfamily. In terms of assembly, monomer. In terms of tissue distribution, expressed by the venom gland.

It localises to the secreted. Functionally, thrombin-like snake venom serine protease that clots rabbit fibrinogen. Only the beta chain of fibrinogen (FGB) is cleaved, releasing fibrinopeptide B. Incubation with human fibrinogen alpha and beta resulted in cleavage of both fibrinogen chains but generated neither fibrinopeptide A nor fibrinopeptide B. Promotes clotting of rabbit fibrinogen, but not bovine or human fibrinogen. The polypeptide is Thrombin-like enzyme elegaxobin-1 (Protobothrops elegans (Elegant pitviper)).